Here is a 519-residue protein sequence, read N- to C-terminus: Histidine ammonia-lyase (519 aa).

The segment at residues 146–148 (ASG) is a cross-link (5-imidazolinone (Ala-Gly)). Position 147 is a 2,3-didehydroalanine (Ser) (serine 147).

It belongs to the PAL/histidase family. Contains an active site 4-methylidene-imidazol-5-one (MIO), which is formed autocatalytically by cyclization and dehydration of residues Ala-Ser-Gly.

The protein resides in the cytoplasm. The enzyme catalyses L-histidine = trans-urocanate + NH4(+). Its pathway is amino-acid degradation; L-histidine degradation into L-glutamate; N-formimidoyl-L-glutamate from L-histidine: step 1/3. This chain is Histidine ammonia-lyase, found in Bradyrhizobium diazoefficiens (strain JCM 10833 / BCRC 13528 / IAM 13628 / NBRC 14792 / USDA 110).